Here is a 184-residue protein sequence, read N- to C-terminus: Regulatory protein RecX (184 aa).

Residues 1–21 are disordered; sequence MTLFPLPSTSDPAEADESTKR.

This sequence belongs to the RecX family.

It localises to the cytoplasm. Modulates RecA activity. In Mycolicibacterium vanbaalenii (strain DSM 7251 / JCM 13017 / BCRC 16820 / KCTC 9966 / NRRL B-24157 / PYR-1) (Mycobacterium vanbaalenii), this protein is Regulatory protein RecX.